The sequence spans 165 residues: Phosphopantetheine adenylyltransferase (165 aa).

S10 contributes to the substrate binding site. ATP is bound by residues 10–11 (SF) and H18. Substrate contacts are provided by K42, S79, and R93. ATP is bound by residues 94 to 96 (GLR), E104, and 129 to 135 (VRPITAT).

This sequence belongs to the bacterial CoaD family. In terms of assembly, homohexamer. It depends on Mg(2+) as a cofactor.

The protein resides in the cytoplasm. The enzyme catalyses (R)-4'-phosphopantetheine + ATP + H(+) = 3'-dephospho-CoA + diphosphate. It participates in cofactor biosynthesis; coenzyme A biosynthesis; CoA from (R)-pantothenate: step 4/5. In terms of biological role, reversibly transfers an adenylyl group from ATP to 4'-phosphopantetheine, yielding dephospho-CoA (dPCoA) and pyrophosphate. The sequence is that of Phosphopantetheine adenylyltransferase from Bradyrhizobium diazoefficiens (strain JCM 10833 / BCRC 13528 / IAM 13628 / NBRC 14792 / USDA 110).